A 773-amino-acid polypeptide reads, in one-letter code: Preaspterpenacid I synthase sttA (773 aa).

The tract at residues 4-359 (ISDVMKHCVP…RYHRTDLATT (356 aa)) is sesterterpenoid synthase. Residue Asp105 coordinates Mg(2+). Substrate is bound at residue Asp105. The tract at residues 211–214 (RVNE) is substrate. Residue Asn255 participates in substrate binding. Substrate stretches follow at residues 259–263 (SFPKE) and 350–351 (RY). The interval 360-769 (AEDRATLIGK…RMMLLGMGPK (410 aa)) is geranylfarnesyl diphosphate synthase. Positions 423–447 (AFKKRNSRNGKQNGTEGSKSTFTNG) are disordered. Over residues 431 to 447 (NGKQNGTEGSKSTFTNG) the composition is skewed to polar residues. Positions 493, 496, and 525 each coordinate isopentenyl diphosphate. The Mg(2+) site is built by Asp532 and Asp536. Arg541 is a dimethylallyl diphosphate binding site. An isopentenyl diphosphate-binding site is contributed by Arg542. Dimethylallyl diphosphate is bound by residues Lys614, Thr615, Gln652, Asn659, and Lys669.

It in the N-terminal section; belongs to the terpene synthase family. This sequence in the C-terminal section; belongs to the FPP/GGPP synthase family.

It carries out the reaction 4 isopentenyl diphosphate + dimethylallyl diphosphate = (2E,6E,10E,14E)-geranylfarnesyl diphosphate + 4 diphosphate. The enzyme catalyses (2E,6E,10E,14E)-geranylfarnesyl diphosphate + H2O = preaspterpenacid acid I + diphosphate. Its pathway is secondary metabolite biosynthesis; terpenoid biosynthesis. Sesterterpenoid synthase; part of the gene cluster that mediates the biosynthesis of aspterpenacids. Performs both prenyl transferase and terpene cyclase activity, converting isopentenyl diphosphate and dimethylallyl diphosphate into geranylfarnesyl diphosphate (GFPP) and then converting GFPP into preaspterpenacid I. C22-oxidative modification of preaspterpenacid I by the cytochrome P450 monooxygenase sttB then leads to preaspterpenacid II. It has still to be determined how preaspterpenacid II is further modified to produce aspterpenacids. In Aspergillus terreus (strain NIH 2624 / FGSC A1156), this protein is Preaspterpenacid I synthase sttA.